The chain runs to 426 residues: Phosphomethylpyrimidine synthase (426 aa).

Substrate is bound by residues Asn65, Met94, Tyr123, His162, 184–186, 225–228, and Glu264; these read SRG and DGMR. His268 is a Zn(2+) binding site. A substrate-binding site is contributed by Tyr291. His332 contacts Zn(2+). Cys408, Cys411, and Cys415 together coordinate [4Fe-4S] cluster.

It belongs to the ThiC family. Requires [4Fe-4S] cluster as cofactor.

The catalysed reaction is 5-amino-1-(5-phospho-beta-D-ribosyl)imidazole + S-adenosyl-L-methionine = 4-amino-2-methyl-5-(phosphooxymethyl)pyrimidine + CO + 5'-deoxyadenosine + formate + L-methionine + 3 H(+). It participates in cofactor biosynthesis; thiamine diphosphate biosynthesis. In terms of biological role, catalyzes the synthesis of the hydroxymethylpyrimidine phosphate (HMP-P) moiety of thiamine from aminoimidazole ribotide (AIR) in a radical S-adenosyl-L-methionine (SAM)-dependent reaction. This is Phosphomethylpyrimidine synthase from Methanocaldococcus jannaschii (strain ATCC 43067 / DSM 2661 / JAL-1 / JCM 10045 / NBRC 100440) (Methanococcus jannaschii).